The sequence spans 141 residues: Superoxide dismutase [Cu-Zn], chloroplastic (141 aa).

Positions 33, 35, and 50 each coordinate Cu cation. Cys-44 and Cys-133 are joined by a disulfide. The Zn(2+) site is built by His-50, His-58, His-67, and Asp-70. His-107 is a binding site for Cu cation.

The protein belongs to the Cu-Zn superoxide dismutase family. Homotetramer. Requires Cu cation as cofactor. Zn(2+) serves as cofactor.

Its subcellular location is the plastid. It localises to the chloroplast. The catalysed reaction is 2 superoxide + 2 H(+) = H2O2 + O2. Functionally, destroys radicals which are normally produced within the cells and which are toxic to biological systems. The polypeptide is Superoxide dismutase [Cu-Zn], chloroplastic (SODCP) (Pinus sylvestris (Scotch pine)).